Reading from the N-terminus, the 593-residue chain is MAFRRTEGMSMIQALAMTVAEIPVFLYTTFGQSAFSQLRLTPGLRKVLFATALGTVALALAAHQLKRRRRKKKQVGPEMGGEHLGTVPLPILMARKVPSVKKGYSNRRVQSPSSKSNDTLSGISSIEPSKHSGSSHSLASMVVVNSSSPTAACSGPWETRGIEESVTTADGNAESLYMQGMELFEEALQKWEQALSVGQRGDSGSTPTPGDGLRNPETASEALSEPESQRKEFAEKLESLLHRAYHLQEEFGSTFPADSMLLDLERTLMLPLTEGSLRLRADDGDSLTSEDSFFSATELFESLQVGDYPIPLSRPAAAYEEALQLVKEGKVPCRTLRTELLGCYSDQDFLAKLHCVRQAFEGLLEDKSHQLFFGEVGRQMVTGLMTKAEKSPKGFLESYEEMLSYALRPETWATTRLELEGRGVVCMSFFDIVLDFILMDAFEDLENPPSSVLAVLRNRWLSDSFKETALATACWSVLKAKRRLLMVPDGFISHFYSVSEHVSPVLAFGFLGPKPQLSEVCAFFKHQIVQYLTDMFDLDNVRYTSVPALAEDILQLSRRRSEILLGYLGVPAASSIGLNGVLPRENGPPEALQ.

2 consecutive transmembrane segments (helical) span residues 11 to 31 and 42 to 62; these read MIQA…TTFG and PGLR…ALAA. Disordered stretches follow at residues 101–134 and 195–228; these read KKGY…HSGS and LSVG…EPES. Residues 107–123 are compositionally biased toward polar residues; the sequence is RRVQSPSSKSNDTLSGI. A compositionally biased stretch (low complexity) spans 124-134; that stretch reads SSIEPSKHSGS. Serine 132 carries the post-translational modification Phosphoserine. Threonine 206 is modified (phosphothreonine). 3 positions are modified to phosphoserine: serine 220, serine 224, and serine 228. Residue threonine 273 is modified to Phosphothreonine. Residues serine 276 and serine 295 each carry the phosphoserine modification. Residues 292–298 carry the FFAT motif; it reads SFFSATE. Residues 563-583 form a helical membrane-spanning segment; sequence ILLGYLGVPAASSIGLNGVLP.

Belongs to the mitoguardin family. Homodimer and heterodimer; forms heterodimers with MIGA1. Interacts with PLD6/MitoPLD. Interacts (via phosphorylated FFAT motif) with MOSPD2. In terms of processing, phosphorylation at Ser-295 of the FFAT motif activates interaction with MOSPD2.

Its subcellular location is the mitochondrion outer membrane. Its function is as follows. Regulator of mitochondrial fusion: acts by forming homo- and heterodimers at the mitochondrial outer membrane and facilitating the formation of PLD6/MitoPLD dimers. May act by regulating phospholipid metabolism via PLD6/MitoPLD. The polypeptide is Mitoguardin 2 (Bos taurus (Bovine)).